Reading from the N-terminus, the 526-residue chain is Na(+)/H(+) antiporter NhaB (526 aa).

The next 12 helical transmembrane spans lie at 25–45 (ILLFLLINPIAFYLDPFIAGW), 52–72 (IFTLAMALKCYPLQPGGLLAI), 89–109 (LVANIEVLLLLVFMVAGIYFM), 130–164 (LSLAFCLVSAFLSAFLDALTVIAVVISVATGFYAI), 204–224 (LMMHAAIGTALGGVCTLVGEP), 242–262 (IRMSPVTVPVFICGLLTCVLV), 307–327 (IALWLILGLAMHLAAVGLIGL), 350–370 (QEALPFTALLAVFFSVVAVII), 391–411 (LALFYLANGLLSMVSDNVFVG), 448–468 (VATPNGQAAFLFMLTSALAPL), 479–499 (MALPYTLVLGLVGFFSVEMLL), and 505–525 (WFYQAGWLVLDNVAPAALPVL).

It belongs to the NhaB Na(+)/H(+) (TC 2.A.34) antiporter family.

It localises to the cell inner membrane. The catalysed reaction is 2 Na(+)(in) + 3 H(+)(out) = 2 Na(+)(out) + 3 H(+)(in). Functionally, na(+)/H(+) antiporter that extrudes sodium in exchange for external protons. The protein is Na(+)/H(+) antiporter NhaB of Aeromonas hydrophila subsp. hydrophila (strain ATCC 7966 / DSM 30187 / BCRC 13018 / CCUG 14551 / JCM 1027 / KCTC 2358 / NCIMB 9240 / NCTC 8049).